We begin with the raw amino-acid sequence, 428 residues long: Putative ankyrin repeat protein FPV234 (428 aa).

ANK repeat units follow at residues 6–35 (KDDI…DPNV), 39–68 (YQYS…DPNI), 71–100 (FFTP…IVNL), 103–132 (YCLK…DINS), 137–169 (NGKY…DINK), 174–202 (TNTS…NINI), 206–238 (MGRN…DINA), and 242–271 (EGNT…YLSY).

The chain is Putative ankyrin repeat protein FPV234 from Fowlpox virus (strain NVSL) (FPV).